The sequence spans 125 residues: Insulin growth factor-like family member 3 (125 aa).

The signal sequence occupies residues 1–24 (MRPRCCILALVCWITVFLLQCSKG).

The protein belongs to the IGFL family. Detected in the cerebellum.

It localises to the secreted. Its function is as follows. Potential ligand of the IGFLR1 cell membrane receptor. The chain is Insulin growth factor-like family member 3 (IGFL3) from Homo sapiens (Human).